A 172-amino-acid polypeptide reads, in one-letter code: Ribosome maturation factor RimM (172 aa).

The region spanning 95-168 (DEGEFYYHQI…RVDVAIMEGL (74 aa)) is the PRC barrel domain.

Belongs to the RimM family. In terms of assembly, binds ribosomal protein uS19.

It is found in the cytoplasm. In terms of biological role, an accessory protein needed during the final step in the assembly of 30S ribosomal subunit, possibly for assembly of the head region. Essential for efficient processing of 16S rRNA. May be needed both before and after RbfA during the maturation of 16S rRNA. It has affinity for free ribosomal 30S subunits but not for 70S ribosomes. This Streptococcus uberis (strain ATCC BAA-854 / 0140J) protein is Ribosome maturation factor RimM.